A 341-amino-acid chain; its full sequence is UDP-3-O-acylglucosamine N-acyltransferase (341 aa).

His237 acts as the Proton acceptor in catalysis.

Belongs to the transferase hexapeptide repeat family. LpxD subfamily. In terms of assembly, homotrimer.

It catalyses the reaction a UDP-3-O-[(3R)-3-hydroxyacyl]-alpha-D-glucosamine + a (3R)-hydroxyacyl-[ACP] = a UDP-2-N,3-O-bis[(3R)-3-hydroxyacyl]-alpha-D-glucosamine + holo-[ACP] + H(+). It functions in the pathway bacterial outer membrane biogenesis; LPS lipid A biosynthesis. Catalyzes the N-acylation of UDP-3-O-acylglucosamine using 3-hydroxyacyl-ACP as the acyl donor. Is involved in the biosynthesis of lipid A, a phosphorylated glycolipid that anchors the lipopolysaccharide to the outer membrane of the cell. The protein is UDP-3-O-acylglucosamine N-acyltransferase of Azoarcus sp. (strain BH72).